A 428-amino-acid chain; its full sequence is Glutamate-1-semialdehyde 2,1-aminomutase 1 (428 aa).

K267 is modified (N6-(pyridoxal phosphate)lysine).

Belongs to the class-III pyridoxal-phosphate-dependent aminotransferase family. HemL subfamily. Homodimer. Requires pyridoxal 5'-phosphate as cofactor.

The protein localises to the cytoplasm. The catalysed reaction is (S)-4-amino-5-oxopentanoate = 5-aminolevulinate. It participates in porphyrin-containing compound metabolism; protoporphyrin-IX biosynthesis; 5-aminolevulinate from L-glutamyl-tRNA(Glu): step 2/2. The protein is Glutamate-1-semialdehyde 2,1-aminomutase 1 of Staphylococcus aureus (strain bovine RF122 / ET3-1).